The following is a 180-amino-acid chain: Translation machinery-associated protein 16 homolog (180 aa).

Over residues M1–K12 the composition is skewed to basic and acidic residues. Residues M1–K32 are disordered. The span at H13–K32 shows a compositional bias: basic residues.

The protein belongs to the TMA16 family.

This Drosophila melanogaster (Fruit fly) protein is Translation machinery-associated protein 16 homolog.